Here is a 513-residue protein sequence, read N- to C-terminus: Autophagy-related protein 18 (513 aa).

One copy of the WD 1 repeat lies at 2–40 (SDLPIINFINFNQNGTCISIGTSQGFKIFNCEPFGRFYQ). The disordered stretch occupies residues 167 to 225 (NNINIKKSDAAEDPLRKDHFAYDPSDHSHPQSTTESTSNNHNRTYSSGNNNNTNSNPNK). Over residues 172 to 195 (KKSDAAEDPLRKDHFAYDPSDHSH) the composition is skewed to basic and acidic residues. Positions 205–225 (NNHNRTYSSGNNNNTNSNPNK) are enriched in low complexity. A WD 2 repeat occupies 248-288 (AHKGEIAALKLSADGTLLATASEKGTIIRVFNVENGSKVYQ). Residues 289-292 (FRRG) form a necessary for proper localization to vacuole membrane region. The short motif at 289 to 293 (FRRGT) is the L/FRRG motif element. The stretch at 293–332 (TYSTKISSLSFSKDNQFLAVCSSSKTVHIFKLGEKIIDNT) is one WD 3 repeat. The tract at residues 333-398 (KPNELNSDDD…TVGRMIRKSS (66 aa)) is disordered. Residues 338-369 (NSDDDMDDDLLPQFENGDDEEEVDEETLDEEA) show a composition bias toward acidic residues.

The protein belongs to the WD repeat PROPPIN family. As to quaternary structure, component of the PI(3,5)P2 regulatory complex. Interacts with ATG2 and ATG9. The ATG2-ATG18 complex is essential for autophagosome formation.

It localises to the preautophagosomal structure membrane. Its subcellular location is the vacuole membrane. It is found in the endosome membrane. In terms of biological role, component of the PI(3,5)P2 regulatory complex that regulates both the synthesis and turnover of phosphatidylinositol 3,5-bisphosphate (PtdIns(3,5)P2). Plays an important role in osmotically-induced vacuole fragmentation. Required for cytoplasm to vacuole transport (Cvt) vesicle formation, pexophagy and starvation-induced autophagy. Involved in correct ATG9 trafficking to the pre-autophagosomal structure. With ATG2, protects ATG8 from ATG4-mediated cleavage. In Kluyveromyces marxianus (strain DMKU3-1042 / BCC 29191 / NBRC 104275) (Yeast), this protein is Autophagy-related protein 18.